The chain runs to 1918 residues: NFX1-type zinc finger-containing protein 1 (1918 aa).

The span at methionine 1–proline 12 shows a compositional bias: basic and acidic residues. Disordered stretches follow at residues methionine 1–asparagine 58 and arginine 75–glutamine 140. Residues arginine 30–alanine 42 show a composition bias toward low complexity. Basic and acidic residues predominate over residues arginine 82–tryptophan 105. The segment covering serine 120–threonine 129 has biased composition (polar residues). Residues aspartate 286–threonine 313 are a coiled coil. 2 disordered regions span residues serine 796–glutamate 819 and threonine 876–lysine 896. A compositionally biased stretch (acidic residues) spans glutamate 809–glutamate 819. Over residues alanine 877–tryptophan 887 the composition is skewed to polar residues. Residues glutamate 886–arginine 967 adopt a coiled-coil conformation. NF-X1-type zinc fingers lie at residues cysteine 1298–lysine 1320, glycine 1330–valine 1346, cysteine 1382–glutamate 1400, cysteine 1441–glutamine 1463, cysteine 1471–arginine 1488, and cysteine 1546–isoleucine 1564. A coiled-coil region spans residues leucine 1741 to leucine 1820. The RZ-type zinc-finger motif lies at isoleucine 1827–histidine 1898. Residues cysteine 1849, histidine 1853, cysteine 1869, and cysteine 1872 each coordinate Zn(2+).

Belongs to the ZNFX1 family. Interacts with MAVS. Widely expressed.

Its subcellular location is the mitochondrion outer membrane. The protein resides in the cytoplasm. It localises to the stress granule. Functionally, RNA-binding protein that initiates the antiviral response and is required to restrict the replication of RNA viruses. Acts as a double-stranded RNA (dsRNA) sensor that recognizes viral RNA and then interacts with MAVS to initiate the type I interferon response. Also required for immunity against some bacteria, such as mycobacteria. The protein is NFX1-type zinc finger-containing protein 1 of Homo sapiens (Human).